The sequence spans 506 residues: ATP synthase subunit alpha, chloroplastic (506 aa).

Gly-172–Thr-179 contributes to the ATP binding site.

This sequence belongs to the ATPase alpha/beta chains family. In terms of assembly, F-type ATPases have 2 components, CF(1) - the catalytic core - and CF(0) - the membrane proton channel. CF(1) has five subunits: alpha(3), beta(3), gamma(1), delta(1), epsilon(1). CF(0) has four main subunits: a, b, b' and c.

The protein localises to the plastid. The protein resides in the chloroplast thylakoid membrane. The catalysed reaction is ATP + H2O + 4 H(+)(in) = ADP + phosphate + 5 H(+)(out). Its function is as follows. Produces ATP from ADP in the presence of a proton gradient across the membrane. The alpha chain is a regulatory subunit. This Pleurastrum terricola (Filamentous green alga) protein is ATP synthase subunit alpha, chloroplastic.